Here is a 271-residue protein sequence, read N- to C-terminus: ATP synthase subunit delta (271 aa).

This sequence belongs to the ATPase delta chain family. F-type ATPases have 2 components, F(1) - the catalytic core - and F(0) - the membrane proton channel. F(1) has five subunits: alpha(3), beta(3), gamma(1), delta(1), epsilon(1). F(0) has three main subunits: a(1), b(2) and c(10-14). The alpha and beta chains form an alternating ring which encloses part of the gamma chain. F(1) is attached to F(0) by a central stalk formed by the gamma and epsilon chains, while a peripheral stalk is formed by the delta and b chains.

The protein resides in the cell membrane. In terms of biological role, f(1)F(0) ATP synthase produces ATP from ADP in the presence of a proton or sodium gradient. F-type ATPases consist of two structural domains, F(1) containing the extramembraneous catalytic core and F(0) containing the membrane proton channel, linked together by a central stalk and a peripheral stalk. During catalysis, ATP synthesis in the catalytic domain of F(1) is coupled via a rotary mechanism of the central stalk subunits to proton translocation. Functionally, this protein is part of the stalk that links CF(0) to CF(1). It either transmits conformational changes from CF(0) to CF(1) or is implicated in proton conduction. The chain is ATP synthase subunit delta from Streptomyces griseus subsp. griseus (strain JCM 4626 / CBS 651.72 / NBRC 13350 / KCC S-0626 / ISP 5235).